An 885-amino-acid chain; its full sequence is Leucine--tRNA ligase (885 aa).

Positions P48–H58 match the 'HIGH' region motif. Positions T639–S643 match the 'KMSKS' region motif. K642 provides a ligand contact to ATP.

This sequence belongs to the class-I aminoacyl-tRNA synthetase family.

The protein resides in the cytoplasm. The catalysed reaction is tRNA(Leu) + L-leucine + ATP = L-leucyl-tRNA(Leu) + AMP + diphosphate. This is Leucine--tRNA ligase from Bordetella bronchiseptica (strain ATCC BAA-588 / NCTC 13252 / RB50) (Alcaligenes bronchisepticus).